The sequence spans 314 residues: Ecto-ADP-ribosyltransferase 4 (314 aa).

A signal peptide spans M1–G46. 2 cysteine pairs are disulfide-bonded: C69/C280 and C182/C231. The TR mART core domain occupies K91–S276. The N-linked (GlcNAc...) asparagine glycan is linked to N114. Y126 serves as a coordination point for NAD(+). N178 carries an N-linked (GlcNAc...) asparagine glycan. NAD(+) is bound at residue Q206. A glycan (N-linked (GlcNAc...) asparagine) is linked at N222. Residue S240 participates in NAD(+) binding. N-linked (GlcNAc...) asparagine glycosylation is found at N257 and N274. A285 carries the GPI-anchor amidated alanine lipid modification. The propeptide at S286–V314 is removed in mature form.

This sequence belongs to the Arg-specific ADP-ribosyltransferase family.

Its subcellular location is the cell membrane. The enzyme catalyses L-arginyl-[protein] + NAD(+) = N(omega)-(ADP-D-ribosyl)-L-arginyl-[protein] + nicotinamide + H(+). This chain is Ecto-ADP-ribosyltransferase 4 (ART4), found in Pan troglodytes (Chimpanzee).